A 156-amino-acid polypeptide reads, in one-letter code: Small ribosomal subunit protein uS7 (156 aa).

Belongs to the universal ribosomal protein uS7 family. As to quaternary structure, part of the 30S ribosomal subunit. Contacts proteins S9 and S11.

One of the primary rRNA binding proteins, it binds directly to 16S rRNA where it nucleates assembly of the head domain of the 30S subunit. Is located at the subunit interface close to the decoding center, probably blocks exit of the E-site tRNA. The sequence is that of Small ribosomal subunit protein uS7 from Maridesulfovibrio salexigens (strain ATCC 14822 / DSM 2638 / NCIMB 8403 / VKM B-1763) (Desulfovibrio salexigens).